A 241-amino-acid polypeptide reads, in one-letter code: CD99 antigen-like protein 2 (241 aa).

Positions 1 to 23 are cleaved as a signal peptide; sequence MAKWGSPFVFALACLALSWRVYG. Over 24 to 173 the chain is Extracellular; it reads DDFDLYDALG…TGFGSQAETG (150 aa). The interval 30–168 is disordered; that stretch reads DALGDPTEKP…NDGSDTGFGS (139 aa). The span at 143-154 shows a compositional bias: gly residues; that stretch reads GGGGGGGGGRAT. Residues 174 to 196 form a helical membrane-spanning segment; it reads TIAGIASALAMALIGAVSSYISY. The Cytoplasmic portion of the chain corresponds to 197 to 241; sequence QQKKFCFSIQEGLNAEYVKGEHMEAVVSEEPQVKYSVVESQSAIP.

The protein belongs to the CD99 family.

The protein localises to the cell membrane. It is found in the cell junction. May function as a homophilic adhesion molecule. The polypeptide is CD99 antigen-like protein 2 (cd99l2) (Xenopus tropicalis (Western clawed frog)).